The sequence spans 642 residues: Threonine--tRNA ligase (642 aa).

Positions 1-61 (MPVVTLPDGS…DSDANLAIIT (61 aa)) constitute a TGS domain. Positions 243-534 (DHRKIGKQLD…LTEEYAGFFP (292 aa)) are catalytic. Residues Cys-334, His-385, and His-511 each contribute to the Zn(2+) site.

The protein belongs to the class-II aminoacyl-tRNA synthetase family. In terms of assembly, homodimer. Zn(2+) is required as a cofactor.

It is found in the cytoplasm. The enzyme catalyses tRNA(Thr) + L-threonine + ATP = L-threonyl-tRNA(Thr) + AMP + diphosphate + H(+). Its function is as follows. Catalyzes the attachment of threonine to tRNA(Thr) in a two-step reaction: L-threonine is first activated by ATP to form Thr-AMP and then transferred to the acceptor end of tRNA(Thr). Also edits incorrectly charged L-seryl-tRNA(Thr). The polypeptide is Threonine--tRNA ligase (Photorhabdus laumondii subsp. laumondii (strain DSM 15139 / CIP 105565 / TT01) (Photorhabdus luminescens subsp. laumondii)).